Consider the following 1173-residue polypeptide: BRCA2-interacting transcriptional repressor EMSY (1173 aa).

The 85-residue stretch at 16–100 (CKRILRKLEL…EWSIEGRRLV (85 aa)) folds into the ENT domain. Residues 149-177 (STTSTPPSASAPSSSSAAVKSPRPASPAS) show a composition bias toward low complexity. Disordered regions lie at residues 149–179 (STTSTPPSASAPSSSSAAVKSPRPASPASNV), 191–216 (KSVSCSDEDEKPRKRRRTSSSSSSPV), 676–720 (NRSA…DAPP), 797–816 (SAEQRESPEPSGQSAAESDA), 905–998 (RVCE…GAQV), 1020–1046 (PRAPVSSSSSSEAALKLQAESSSEKPS), and 1139–1173 (DYTSQRLDEEQAMEQEVDSSNDEGAAASPSADQSQ). Over residues 683 to 693 (TTSTHTSAAAA) the composition is skewed to low complexity. Composition is skewed to low complexity over residues 911–921 (SSSSSSSSSSS) and 937–953 (SSSSAPATAASANTPHT). Polar residues-rich tracts occupy residues 961–976 (QAPTTHNRPNTHTQLS) and 989–998 (SSKTSSGAQV). The span at 1025-1040 (SSSSSSEAALKLQAES) shows a compositional bias: low complexity. Over residues 1148–1159 (EQAMEQEVDSSN) the composition is skewed to acidic residues.

Homodimer.

The protein localises to the nucleus. In terms of biological role, regulator which is able to repress transcription, possibly via its interaction with a multiprotein chromatin remodeling complex that modifies the chromatin. The polypeptide is BRCA2-interacting transcriptional repressor EMSY (Danio rerio (Zebrafish)).